The following is a 252-amino-acid chain: Pantothenate synthetase (252 aa).

29–36 (MGNLHAGH) provides a ligand contact to ATP. The active-site Proton donor is the His36. Gln60 is a binding site for (R)-pantoate. Gln60 contributes to the beta-alanine binding site. Residue 146 to 149 (GEKD) coordinates ATP. (R)-pantoate is bound at residue Gln152. ATP-binding positions include Val175 and 183–186 (CSSR).

It belongs to the pantothenate synthetase family. As to quaternary structure, homodimer.

Its subcellular location is the cytoplasm. The enzyme catalyses (R)-pantoate + beta-alanine + ATP = (R)-pantothenate + AMP + diphosphate + H(+). It participates in cofactor biosynthesis; (R)-pantothenate biosynthesis; (R)-pantothenate from (R)-pantoate and beta-alanine: step 1/1. Catalyzes the condensation of pantoate with beta-alanine in an ATP-dependent reaction via a pantoyl-adenylate intermediate. This is Pantothenate synthetase from Legionella pneumophila (strain Corby).